A 208-amino-acid chain; its full sequence is Thymidylate kinase (208 aa).

Residue 10-17 participates in ATP binding; it reads GLEGAGKS.

The protein belongs to the thymidylate kinase family.

The catalysed reaction is dTMP + ATP = dTDP + ADP. Phosphorylation of dTMP to form dTDP in both de novo and salvage pathways of dTTP synthesis. In Glaesserella parasuis serovar 5 (strain SH0165) (Haemophilus parasuis), this protein is Thymidylate kinase.